The following is a 420-amino-acid chain: Calsequestrin-1 (420 aa).

The first 22 residues, methionine 1 to glycine 22, serve as a signal peptide directing secretion. An N-linked (GlcNAc...) asparagine glycan is attached at asparagine 338. The interval leucine 369–aspartate 420 is disordered.

The protein belongs to the calsequestrin family. Monomer; increases in response to a depletion of intracellular calcium. Homodimer. Homotetramer and homopolymer. Can form linear homooligomers. Ca(2+) ions promote oligomerization. In terms of tissue distribution, detected in skeletal muscle (at protein level). Detected in skeletal muscle.

It is found in the endoplasmic reticulum. The protein localises to the sarcoplasmic reticulum. Its subcellular location is the sarcoplasmic reticulum lumen. It localises to the sarcoplasmic reticulum membrane. The protein resides in the mitochondrion matrix. Functionally, calsequestrin is a high-capacity, moderate affinity, calcium-binding protein and thus acts as an internal calcium store in muscle. Calcium ions are bound by clusters of acidic residues at the protein surface, often at the interface between subunits. Can bind around 80 Ca(2+) ions. Regulates the release of lumenal Ca(2+) via the calcium release channel RYR1; this plays an important role in triggering muscle contraction. Negatively regulates store-operated Ca(2+) entry (SOCE) activity. This Pelophylax lessonae (Pool frog) protein is Calsequestrin-1.